Consider the following 395-residue polypeptide: MSKRDIVLTNVTVVQLLRQPCPEPRVEAEPEPPAQPQPQPEPIKEEVPPPPPPPPAPKKVRELIVGINGFGRIGRLVLRACMEKGVKVVAVNDPFIDLEYMVYMFKYDSTHGRYKGNVEHKKGQLVVDNNEISVFQCKQPKEIPWKSVGSPFVVEATGVYLSLEETKAHIEAGAQRVVICAPSPDAPMFVMGVNEKEYNPSSMKIVSNASCTTNCLAPLAKVIHERFGILEGLMTTVHSYTATQKTVDGPSKKAWRDGRGAHQNIIPASTGAAKAVGKVIPDLKGKLTGMAFRVPTPDVSVVDLTCRLAQPTPYSAIKDAIKAAAKGPMAGILAYTEDEVVSTDFLSDTHSSIFDAKAGIALNDNFVKLISWYDNEYGYSNRVVDLVRYMFSRDK.

Residues 1–60 form a testis-specific N-terminal extension region; the sequence is MSKRDIVLTNVTVVQLLRQPCPEPRVEAEPEPPAQPQPQPEPIKEEVPPPPPPPPAPKKV. The segment at 19-59 is disordered; it reads QPCPEPRVEAEPEPPAQPQPQPEPIKEEVPPPPPPPPAPKK. 2 stretches are compositionally biased toward pro residues: residues 31-41 and 48-57; these read EPPAQPQPQPE and PPPPPPPPAP. Residues 72-73, D93, and K138 each bind NAD(+); that span reads RI. Residues 210 to 212, T241, 270 to 271, and R293 each bind D-glyceraldehyde 3-phosphate; these read SCT and TG. Residue C211 is the Nucleophile of the active site. N375 contacts NAD(+).

It belongs to the glyceraldehyde-3-phosphate dehydrogenase family. Homotetramer.

It is found in the cytoplasm. The enzyme catalyses D-glyceraldehyde 3-phosphate + phosphate + NAD(+) = (2R)-3-phospho-glyceroyl phosphate + NADH + H(+). It participates in carbohydrate degradation; glycolysis; pyruvate from D-glyceraldehyde 3-phosphate: step 1/5. May play an important role in regulating the switch between different pathways for energy production during spermiogenesis and in the spermatozoon. Required for sperm motility and male fertility. The chain is Glyceraldehyde-3-phosphate dehydrogenase, testis-specific (GAPDHS) from Bos taurus (Bovine).